We begin with the raw amino-acid sequence, 92 residues long: Small ribosomal subunit protein uS19 (92 aa).

This sequence belongs to the universal ribosomal protein uS19 family.

Its function is as follows. Protein S19 forms a complex with S13 that binds strongly to the 16S ribosomal RNA. The protein is Small ribosomal subunit protein uS19 of Vibrio vulnificus (strain CMCP6).